Here is a 540-residue protein sequence, read N- to C-terminus: Acyl-CoA synthetase 7 (540 aa).

Residues 186–194 (SSGTTGKPK), Asp-415, Arg-430, and Lys-522 contribute to the ATP site. The Microbody targeting signal motif lies at 538 to 540 (AKL).

Belongs to the ATP-dependent AMP-binding enzyme family. As to expression, expressed in intestine.

It localises to the peroxisome. The enzyme catalyses nonanoate + ATP + CoA = nonanoyl-CoA + AMP + diphosphate. It carries out the reaction IC-asc-C7 + ATP + CoA = IC-asc-C7-CoA + AMP + diphosphate. The catalysed reaction is IC-asc-C9 + ATP + CoA = IC-asc-C9-CoA + AMP + diphosphate. In terms of biological role, plays a role in ascaroside pheromones biosynthesis, which regulates development and behavior. Specifically, activates the side chain of medium-chain indol-3-carbonyl (IC)-ascarosides for shortening through beta-oxidation. Converts IC-asc-C7 and IC-asc-C9 into IC-asc-C7-CoA and IC-asc-C9-CoA, respectively. May play a role in fatty-acid metabolism by activating and converting nonanoate (C9) into nonanoyl-CoA (C9-CoA). The protein is Acyl-CoA synthetase 7 of Caenorhabditis elegans.